Consider the following 371-residue polypeptide: Cysteine proteinase EP-B 1 (371 aa).

The signal sequence occupies residues 1–28; it reads MGLLSKKLLVASMVAAVLAVAAVELCSA. Residues 29–133 constitute a propeptide, activation peptide; that stretch reads IPMEDKDLES…FMYAALNVSD (105 aa). Asparagine 130 is a glycosylation site (N-linked (GlcNAc...) asparagine). Cystine bridges form between cysteine 155–cysteine 197, cysteine 189–cysteine 230, and cysteine 291–cysteine 343. The active site involves cysteine 158. Active-site residues include histidine 297 and asparagine 318.

It belongs to the peptidase C1 family.

In Hordeum vulgare (Barley), this protein is Cysteine proteinase EP-B 1.